The primary structure comprises 150 residues: MRCVVYSIAKSSPLELVKIYQKQCKQFGCELELVDLFPKNIANAQKISKELAQKSYSLAFEPYLNPKAINIALHPKAERGDSFAFSKMLENYLNINFFIAGAYGFEEKFLKDCQAWSLSEMTFSHEVAKIVLCEQIYRALSIIFRHPYHK.

Residues I71, A100, and L118–F123 contribute to the S-adenosyl-L-methionine site.

It belongs to the RNA methyltransferase RlmH family. In terms of assembly, homodimer.

It localises to the cytoplasm. It catalyses the reaction pseudouridine(1915) in 23S rRNA + S-adenosyl-L-methionine = N(3)-methylpseudouridine(1915) in 23S rRNA + S-adenosyl-L-homocysteine + H(+). In terms of biological role, specifically methylates the pseudouridine at position 1915 (m3Psi1915) in 23S rRNA. The protein is Ribosomal RNA large subunit methyltransferase H of Helicobacter acinonychis (strain Sheeba).